A 215-amino-acid chain; its full sequence is 2-dehydro-3-deoxy-phosphogluconate aldolase (215 aa).

Glutamate 46 (proton acceptor) is an active-site residue. Pyruvate is bound by residues arginine 50, threonine 74, and lysine 134. Lysine 134 acts as the Schiff-base intermediate with substrate in catalysis.

It belongs to the KHG/KDPG aldolase family. As to quaternary structure, homotrimer.

The catalysed reaction is 2-dehydro-3-deoxy-6-phospho-D-gluconate = D-glyceraldehyde 3-phosphate + pyruvate. Its pathway is carbohydrate acid metabolism; 2-dehydro-3-deoxy-D-gluconate degradation; D-glyceraldehyde 3-phosphate and pyruvate from 2-dehydro-3-deoxy-D-gluconate: step 2/2. Functionally, involved in the degradation of glucose via the Entner-Doudoroff pathway. Catalyzes the reversible, stereospecific retro-aldol cleavage of 2-keto-3-deoxy-6-phosphogluconate (KDPG) to pyruvate and D-glyceraldehyde-3-phosphate. Involved in the degradation of 3,6-anhydro-L-galactose (L-AnG), which is the major monomeric sugar of red macroalgae. The cleavage of KDPG to glyceraldehyde 3-phosphate and pyruvate is the sixth step of this pathway. The protein is 2-dehydro-3-deoxy-phosphogluconate aldolase of Pseudoalteromonas atlantica (strain T6c / ATCC BAA-1087).